The following is a 403-amino-acid chain: Glyceraldehyde-3-phosphate dehydrogenase A, chloroplastic (403 aa).

The transit peptide at 1-66 directs the protein to the chloroplast; it reads MASSMLSATT…GGPRRAPTEA (66 aa). Residues 77–78, D102, and R147 contribute to the NADP(+) site; that span reads RI. Residues 219–221, T250, R265, 278–279, and R301 each bind D-glyceraldehyde 3-phosphate; these read SCT and TG. The active-site Nucleophile is C220. N383 serves as a coordination point for NADP(+).

This sequence belongs to the glyceraldehyde-3-phosphate dehydrogenase family. Tetramer of either four A chains (GAPDH 2) or two A and two B chains (GAPDH 1).

It is found in the plastid. Its subcellular location is the chloroplast. It carries out the reaction D-glyceraldehyde 3-phosphate + phosphate + NADP(+) = (2R)-3-phospho-glyceroyl phosphate + NADPH + H(+). It functions in the pathway carbohydrate biosynthesis; Calvin cycle. The polypeptide is Glyceraldehyde-3-phosphate dehydrogenase A, chloroplastic (GAPA) (Zea mays (Maize)).